Reading from the N-terminus, the 80-residue chain is Clavanin-D (80 aa).

The signal sequence occupies residues Met-1–Ser-19. The propeptide occupies Leu-20–Lys-29. Phe-52 is modified (phenylalanine amide). Residues Asp-54–Gln-80 constitute a propeptide that is removed on maturation.

Hemocytes and pharyngeal tissues.

The protein resides in the secreted. Functionally, has antimicrobial activity against E.coli, L.monocytogenes and C.albicans. This is Clavanin-D from Styela clava (Sea squirt).